We begin with the raw amino-acid sequence, 54 residues long: ISINQDLKAITDMLLTEQIQARRRCLAALRQRLLDLDSDVSLFNGDLLPNGRCS.

A disulfide bond links Cys-25 and Cys-53. Residue Leu-36 is modified to Leucine amide.

It belongs to the molluscan ELH family. As to quaternary structure, this protein consists of a large 36-residue subunit, bound by a single disulfide-bond to a small 18-residue subunit.

It is found in the secreted. Injected in sexually mature animals califin C excites LB and LC cells of the abdominal ganglion and cause egg-laying. In Aplysia californica (California sea hare), this protein is Califin-C.